The sequence spans 219 residues: Putative GEM-like protein 8 (219 aa).

The GRAM domain maps to 96-174 (KIYKRLFKVS…CKINGVNQSQ (79 aa)).

This sequence belongs to the GEM family.

This chain is Putative GEM-like protein 8, found in Arabidopsis thaliana (Mouse-ear cress).